The following is a 399-amino-acid chain: uncharacterized protein (399 aa).

The next 10 membrane-spanning stretches (helical) occupy residues H6–P26, K27–L47, L60–D80, I111–F131, M147–I167, S173–A193, G195–I215, I220–F240, G328–K348, and I362–A382.

The protein resides in the cell membrane. This is an uncharacterized protein from Haemophilus influenzae (strain ATCC 51907 / DSM 11121 / KW20 / Rd).